Consider the following 381-residue polypeptide: CD2 homolog (381 aa).

The first 16 residues, 1 to 16 (MIIKLIFLICFKIVLS), serve as a signal peptide directing secretion. The Extracellular segment spans residues 17 to 208 (INYWVRYNDT…QNYFLENIHT (192 aa)). Asn24, Asn73, Asn77, Asn85, Asn91, Asn104, Asn121, Asn133, Asn144, Asn176, Asn183, and Asn189 each carry an N-linked (GlcNAc...) asparagine; by host glycan. Disulfide bonds link Cys122-Cys190 and Cys129-Cys173. A helical transmembrane segment spans residues 209–229 (LFYMIIFIVSGITISIFISII). The Cytoplasmic portion of the chain corresponds to 230 to 381 (TFLSLRKRKK…ISLIHVDRII (152 aa)). The interval 243–278 (EIESPPPESNEEEQCQHDDTTSIHEPSPREPLLPKP) is disordered. Basic and acidic residues predominate over residues 256–270 (QCQHDDTTSIHEPSP). Tandem repeats lie at residues 305–310 (KPCPPP), 311–316 (KPCPPP), 317–322 (KPCPPP), 323–328 (KPCPPP), 329–334 (KPCPPP), 335–340 (KPCPPP), and 341–346 (KPCPPP). The 7 X 6 AA tandem repeats of K-[LP]-C-[PRS]-[PS]-[PS] stretch occupies residues 305–334 (KPCPPPKPCPPPKPCPPPKPCPPPKPCPPP). A disordered region spans residues 341-362 (KPCPPPESYSPPKPLPSIPLLP).

The protein belongs to the asfivirus CD2 homolog protein family. In terms of assembly, both glycosylated and nonglycosylated forms interact (via C-terminus) with the host AP-1 complex. In terms of processing, cleaved into two fragments of 63 kDa and 26 kDa containing respectively the glycosylated N-terminus and the nonglycosylated C-terminus. A full-length 89-kDa glycosylated form also exists.

It is found in the host membrane. The protein resides in the virion membrane. Its subcellular location is the host Golgi apparatus. Its function is as follows. May play an immunosuppressive role by inhibiting lymphocyte proliferation and subsequently facilitating viral replication and generalization of infection. Responsible for viral hemadsorption, which may help viral spread. Increases virus replication in the tick vector at the step of virus uptake or replication in the tick gut. May play a role in the host Golgi reorganization to yield viral factories. May play a role in host cell penetration. This is CD2 homolog from African swine fever virus (isolate Warthog/Namibia/Wart80/1980) (ASFV).